Here is a 1017-residue protein sequence, read N- to C-terminus: uncharacterized protein (1017 aa).

The tat-type signal signal peptide spans 1–34 (MGNLTMSRRTFVKTAAITGAAAAAFGASTHTALA). Positions 45 to 103 (DTVAVKTCCRGCGKMECGVKVIVQNGRAIRVEGDEGAFQSMGNCCTKSQSSIQAAYHPD) constitute a 4Fe-4S Mo/W bis-MGD-type domain. [4Fe-4S] cluster contacts are provided by Cys-53, Cys-56, Cys-61, and Cys-89. Lys-91 (electron donor/acceptor) is an active-site residue.

The protein belongs to the prokaryotic molybdopterin-containing oxidoreductase family. [4Fe-4S] cluster is required as a cofactor. Requires Mo-bis(molybdopterin guanine dinucleotide) as cofactor. In terms of processing, predicted to be exported by the Tat system. The position of the signal peptide cleavage has not been experimentally proven.

This is an uncharacterized protein from Eggerthella lenta (strain ATCC 25559 / DSM 2243 / CCUG 17323 / JCM 9979 / KCTC 3265 / NCTC 11813 / VPI 0255 / 1899 B) (Eubacterium lentum).